A 432-amino-acid chain; its full sequence is T-box transcription factor T (432 aa).

The segment at residues 49–217 (LWTRFKELTN…HNPFAKAFLD (169 aa)) is a DNA-binding region (T-box). Residues 274 to 306 (CERYSSLRNHRSAPYPSPYTHRNNSPNNLADNS) are disordered. The span at 293-306 (THRNNSPNNLADNS) shows a compositional bias: polar residues.

In terms of assembly, when not bound to DNA, exists as a monomer. Binds DNA as a dimer. Expressed in presumptive mesodermal cells around the blastopore, and then in the notochord.

The protein resides in the nucleus. Its function is as follows. Involved in the transcriptional regulation of genes required for mesoderm formation and differentiation. Binds to the palindromic T site 5'-TTCACACCTAGGTGTGAA-3' DNA sequence. Causes dorsal mesodermal differentiation of animal cap ectoderm when co-expressed with wnt8 and noggin. None of these molecules causes dorsal mesoderm formation when expressed alone. Establishes the left/right axis at early gastrula stage by directly up-regulating mesodermal expression of zic3. In Xenopus laevis (African clawed frog), this protein is T-box transcription factor T.